We begin with the raw amino-acid sequence, 236 residues long: 7-cyano-7-deazaguanine synthase (236 aa).

Residue 7 to 17 (CSGGLDSVTLA) participates in ATP binding. Zn(2+)-binding residues include C185, C193, C196, and C199.

It belongs to the QueC family. Zn(2+) serves as cofactor.

It carries out the reaction 7-carboxy-7-deazaguanine + NH4(+) + ATP = 7-cyano-7-deazaguanine + ADP + phosphate + H2O + H(+). Its pathway is purine metabolism; 7-cyano-7-deazaguanine biosynthesis. Functionally, catalyzes the ATP-dependent conversion of 7-carboxy-7-deazaguanine (CDG) to 7-cyano-7-deazaguanine (preQ(0)). This chain is 7-cyano-7-deazaguanine synthase, found in Rhizobium johnstonii (strain DSM 114642 / LMG 32736 / 3841) (Rhizobium leguminosarum bv. viciae).